The following is a 243-amino-acid chain: Probable transcriptional regulatory protein TTE1135 (243 aa).

The protein belongs to the TACO1 family.

It localises to the cytoplasm. The chain is Probable transcriptional regulatory protein TTE1135 from Caldanaerobacter subterraneus subsp. tengcongensis (strain DSM 15242 / JCM 11007 / NBRC 100824 / MB4) (Thermoanaerobacter tengcongensis).